Reading from the N-terminus, the 535-residue chain is Cytochrome P450 monooxygenase claQ (535 aa).

Helical transmembrane passes span 7–27 (IGTW…KLVG) and 225–245 (YFAI…NLPT). C472 contributes to the heme binding site.

Belongs to the cytochrome P450 family. Heme is required as a cofactor.

Its subcellular location is the membrane. It functions in the pathway secondary metabolite biosynthesis; terpenoid biosynthesis. Cytochrome P450 monooxygenase; part of the gene cluster that mediates the biosynthesis of clavilactone A, a meroterpenoid that features a unique benzo-fused ten-membered carbocyclic ring unit with an alpha,beta-epoxy-gamma-lactone moiety, forming an intriguing 10/5/3 tricyclic nested skeleton. Cytochrome P450 monooxygenases claO, claP, claQ, claU, and claW are close orthologs, suggesting that a redundant function or pseudogenes are present in the cla cluster. These monoxygenases are not involved in clavilactone A biosynthesis nor its modification. ClaR, ClaS and ClaT are sufficient to produce clavilactone A. The biosynthesis begins with the prenyltransferase claS that transfers geranyl pyrophosphate (GPP) to hydroquinone to produces geranylhydroquinone. The cytochrome P450 monooxygenase claR then catalyzes the diradical coupling reaction between the intramolecular hydroquinone and allyl moieties to form the benzo-fused ten-membered carbocyclic ring unit of wigantol. Finally the cytochrome P450 monooxygenase claT exquisitely and stereoselectively assembles the alpha,beta-epoxy-gamma-lactone moiety, producing clavilactone A via arnebinol A. The protein is Cytochrome P450 monooxygenase claQ of Ampulloclitocybe clavipes (Club foot).